The sequence spans 88 residues: Small ribosomal subunit protein uS17 (88 aa).

The protein belongs to the universal ribosomal protein uS17 family. As to quaternary structure, part of the 30S ribosomal subunit.

In terms of biological role, one of the primary rRNA binding proteins, it binds specifically to the 5'-end of 16S ribosomal RNA. The chain is Small ribosomal subunit protein uS17 from Mycoplasmopsis pulmonis (strain UAB CTIP) (Mycoplasma pulmonis).